A 150-amino-acid polypeptide reads, in one-letter code: Phosphoribosyl-AMP cyclohydrolase (150 aa).

Residue aspartate 93 coordinates Mg(2+). Cysteine 94 is a binding site for Zn(2+). Mg(2+)-binding residues include aspartate 95 and aspartate 97. Positions 112 and 119 each coordinate Zn(2+).

This sequence belongs to the PRA-CH family. In terms of assembly, homodimer. Mg(2+) serves as cofactor. Zn(2+) is required as a cofactor.

The protein localises to the cytoplasm. The enzyme catalyses 1-(5-phospho-beta-D-ribosyl)-5'-AMP + H2O = 1-(5-phospho-beta-D-ribosyl)-5-[(5-phospho-beta-D-ribosylamino)methylideneamino]imidazole-4-carboxamide. It functions in the pathway amino-acid biosynthesis; L-histidine biosynthesis; L-histidine from 5-phospho-alpha-D-ribose 1-diphosphate: step 3/9. Its function is as follows. Catalyzes the hydrolysis of the adenine ring of phosphoribosyl-AMP. This Rhizobium leguminosarum bv. trifolii (strain WSM2304) protein is Phosphoribosyl-AMP cyclohydrolase.